Reading from the N-terminus, the 365-residue chain is 3-methyl-L-tyrosine peroxygenase (365 aa).

313-317 is a binding site for heme; sequence HIGVC.

Heme serves as cofactor.

It catalyses the reaction 3-methyl-L-tyrosine + H2O2 = 5-hydroxy-3-methyl-L-tyrosine + H2O. Its pathway is antibiotic biosynthesis. Functionally, heme-containing peroxygenase that mediates the hydroxylation of 3-methyl-L-tyrosine (3-Me-Tyr) into 3-hydroxy-5-methyl-L-tyrosine (3-OH-5-Me-Tyr) in biosynthesis of saframycin A, a potent antitumor antibiotic that belongs to the tetrahydroisoquinoline family. Involved in biosynthesis of 3-hydroxy-5-methyl-O-methyltyrosine (3-OH-5-Me-OMe-Tyr), a core structure of saframycin A. The protein is 3-methyl-L-tyrosine peroxygenase of Streptomyces lavendulae.